A 349-amino-acid polypeptide reads, in one-letter code: Hyaluronidase Tab y 2.0101 (349 aa).

The first 25 residues, 1–25 (MKLHQGLVCLSVLILLPTCILGDRK), serve as a signal peptide directing secretion. Disulfide bonds link Cys-37–Cys-328 and Cys-205–Cys-216. Residues Asn-41, Asn-81, Asn-99, and Asn-119 are each glycosylated (N-linked (GlcNAc...) asparagine). The active-site Proton donor is the Glu-129. N-linked (GlcNAc...) asparagine glycosylation is present at Asn-147. N-linked (GlcNAc...) asparagine glycosylation is found at Asn-251 and Asn-297.

Belongs to the glycosyl hydrolase 56 family. As to expression, expressed in salivary glands.

It localises to the secreted. It catalyses the reaction Random hydrolysis of (1-&gt;4)-linkages between N-acetyl-beta-D-glucosamine and D-glucuronate residues in hyaluronate.. Hydrolyzes high molecular weight hyaluronic acid to produce small oligosaccharides. The protein is Hyaluronidase Tab y 2.0101 of Tabanus yao (Horsefly).